The sequence spans 234 residues: Ribosomal RNA small subunit methyltransferase G (234 aa).

S-adenosyl-L-methionine is bound by residues Gly74, Phe79, 125–126 (AE), and Arg144.

The protein belongs to the methyltransferase superfamily. RNA methyltransferase RsmG family.

It is found in the cytoplasm. Its function is as follows. Specifically methylates the N7 position of a guanine in 16S rRNA. This is Ribosomal RNA small subunit methyltransferase G from Roseiflexus castenholzii (strain DSM 13941 / HLO8).